Consider the following 270-residue polypeptide: tRNA pseudouridine synthase A (270 aa).

Catalysis depends on Asp-60, which acts as the Nucleophile. Tyr-118 provides a ligand contact to substrate.

This sequence belongs to the tRNA pseudouridine synthase TruA family. In terms of assembly, homodimer.

It carries out the reaction uridine(38/39/40) in tRNA = pseudouridine(38/39/40) in tRNA. Formation of pseudouridine at positions 38, 39 and 40 in the anticodon stem and loop of transfer RNAs. The protein is tRNA pseudouridine synthase A of Salmonella arizonae (strain ATCC BAA-731 / CDC346-86 / RSK2980).